The chain runs to 242 residues: Sugar fermentation stimulation protein homolog (242 aa).

This sequence belongs to the SfsA family.

This is Sugar fermentation stimulation protein homolog from Methanosphaera stadtmanae (strain ATCC 43021 / DSM 3091 / JCM 11832 / MCB-3).